Consider the following 390-residue polypeptide: NADH-dependent butanol dehydrogenase B (390 aa).

This sequence belongs to the iron-containing alcohol dehydrogenase family. Homodimer.

It participates in alcohol metabolism; butanol biosynthesis. In Clostridium acetobutylicum (strain ATCC 824 / DSM 792 / JCM 1419 / IAM 19013 / LMG 5710 / NBRC 13948 / NRRL B-527 / VKM B-1787 / 2291 / W), this protein is NADH-dependent butanol dehydrogenase B (bdhB).